The chain runs to 228 residues: L-ribulose-5-phosphate 4-epimerase UlaF (228 aa).

Substrate contacts are provided by residues Gly26–Asn27, Ser43–Gly44, and Ser72–Ser73. Asp74, His93, and His95 together coordinate Zn(2+). The active-site Proton donor/acceptor is the Asp118. His167 serves as a coordination point for Zn(2+). Residue Tyr225 is the Proton donor/acceptor of the active site.

It belongs to the aldolase class II family. AraD/FucA subfamily. The cofactor is Zn(2+).

The catalysed reaction is L-ribulose 5-phosphate = D-xylulose 5-phosphate. It participates in cofactor degradation; L-ascorbate degradation; D-xylulose 5-phosphate from L-ascorbate: step 4/4. In terms of biological role, catalyzes the isomerization of L-ribulose 5-phosphate to D-xylulose 5-phosphate. Is involved in the anaerobic L-ascorbate utilization. The protein is L-ribulose-5-phosphate 4-epimerase UlaF of Salmonella choleraesuis (strain SC-B67).